The following is a 204-amino-acid chain: Small ribosomal subunit protein uS7 (204 aa).

It belongs to the universal ribosomal protein uS7 family. As to quaternary structure, part of the 30S ribosomal subunit.

Functionally, one of the primary rRNA binding proteins, it binds directly to 16S rRNA where it nucleates assembly of the head domain of the 30S subunit. Is located at the subunit interface close to the decoding center. The chain is Small ribosomal subunit protein uS7 from Methanoregula boonei (strain DSM 21154 / JCM 14090 / 6A8).